The chain runs to 513 residues: Sphingolipid C9-methyltransferase (513 aa).

Transmembrane regions (helical) follow at residues 52-72 (ILFS…GLGF) and 74-94 (TWVF…WSIM). Residues 222-223 (YT), 259-267 (VLDIGCGWG), 285-290 (TLGRNQ), and 315-316 (YR) contribute to the S-adenosyl-L-methionine site.

The protein belongs to the CFA/CMAS family.

The protein localises to the membrane. It catalyses the reaction a (4E,8E)-4-sphinga-4,8-dienine ceramide + S-adenosyl-L-methionine = a 9-methyl-(4E,8E)-sphinga-4,8-dienine ceramide + S-adenosyl-L-homocysteine + H(+). The protein operates within lipid metabolism; sphingolipid metabolism. Functionally, catalyzes methylation of the sphingoid base component of glucosylceramides (GluCers) at the C9-position. Sphingolipid C9-methylation requires 4,8-desaturated ceramides as substrates. Glucosylceramides play important roles in growth, differentiation and pathogenicity. The methyl group at the C9-position distinguishes fungal glucosylceramides from those of plants and animals, and may thus play a role in host-pathogen interactions enabling the host to recognize the fungal attack and initiate specific defense responses. Not necessary for vegetative growth at low temperatures, but plays a role in hyphal formation on solid medium. The chain is Sphingolipid C9-methyltransferase from Candida albicans (strain SC5314 / ATCC MYA-2876) (Yeast).